The following is a 419-amino-acid chain: L-rhamnose isomerase (419 aa).

Positions 262, 294, and 296 each coordinate Mn(2+).

This sequence belongs to the rhamnose isomerase family. Homotetramer. It depends on Mn(2+) as a cofactor.

Its subcellular location is the cytoplasm. It carries out the reaction L-rhamnopyranose = L-rhamnulose. The protein operates within carbohydrate degradation; L-rhamnose degradation; glycerone phosphate from L-rhamnose: step 1/3. In terms of biological role, catalyzes the interconversion of L-rhamnose and L-rhamnulose. This Klebsiella pneumoniae (strain 342) protein is L-rhamnose isomerase.